The following is a 333-amino-acid chain: Glycerol-3-phosphate dehydrogenase [NAD(P)+] (333 aa).

NADPH-binding residues include Ser10, Trp11, His31, Arg32, and Lys105. Sn-glycerol 3-phosphate is bound by residues Lys105, Gly136, and Ser138. Residue Ala140 participates in NADPH binding. The sn-glycerol 3-phosphate site is built by Lys191, Asp244, Ser254, Arg255, and Asn256. Lys191 functions as the Proton acceptor in the catalytic mechanism. Arg255 is an NADPH binding site. NADPH-binding residues include Val279 and Glu281.

This sequence belongs to the NAD-dependent glycerol-3-phosphate dehydrogenase family.

The protein localises to the cytoplasm. It catalyses the reaction sn-glycerol 3-phosphate + NAD(+) = dihydroxyacetone phosphate + NADH + H(+). It carries out the reaction sn-glycerol 3-phosphate + NADP(+) = dihydroxyacetone phosphate + NADPH + H(+). Its pathway is membrane lipid metabolism; glycerophospholipid metabolism. Catalyzes the reduction of the glycolytic intermediate dihydroxyacetone phosphate (DHAP) to sn-glycerol 3-phosphate (G3P), the key precursor for phospholipid synthesis. The chain is Glycerol-3-phosphate dehydrogenase [NAD(P)+] from Chlorobium limicola (strain DSM 245 / NBRC 103803 / 6330).